The following is a 208-amino-acid chain: Large ribosomal subunit protein bL17 (208 aa).

The disordered stretch occupies residues 122 to 208 (TEKKKKKPAK…ASEEAPPKTE (87 aa)). Low complexity predominate over residues 151 to 179 (ADTPAPAAEESAPAKAAEPEAEAAAPEAE).

The protein belongs to the bacterial ribosomal protein bL17 family. Part of the 50S ribosomal subunit. Contacts protein L32.

In Desulfosudis oleivorans (strain DSM 6200 / JCM 39069 / Hxd3) (Desulfococcus oleovorans), this protein is Large ribosomal subunit protein bL17.